Reading from the N-terminus, the 266-residue chain is Undecaprenyl-diphosphatase (266 aa).

Transmembrane regions (helical) follow at residues 39-59 (PGSS…VWYF), 86-106 (SIFI…LFVP), 112-132 (VLRS…FMYL), 153-173 (LIGF…GITI), 189-209 (FSFL…FIFS), 216-236 (IGFL…LLAI), and 246-266 (NGLK…LLNL).

Belongs to the UppP family.

Its subcellular location is the cell inner membrane. It carries out the reaction di-trans,octa-cis-undecaprenyl diphosphate + H2O = di-trans,octa-cis-undecaprenyl phosphate + phosphate + H(+). Catalyzes the dephosphorylation of undecaprenyl diphosphate (UPP). Confers resistance to bacitracin. The sequence is that of Undecaprenyl-diphosphatase from Prochlorococcus marinus (strain MIT 9215).